The chain runs to 584 residues: Levansucrase (584 aa).

The N-terminal stretch at 1–30 (MAHVRRKVATLNMALAGSLLMVLGAQSALA) is a signal peptide. Residue Gln31 is modified to Pyrrolidone carboxylic acid. Sucrose contacts are provided by Trp134, Asp135, Ser225, Arg308, and Asp309. The active-site Nucleophile is the Asp135. Cysteines 339 and 395 form a disulfide. Catalysis depends on Glu401, which acts as the Proton donor/acceptor.

It belongs to the glycosyl hydrolase 68 family. As to quaternary structure, monomer. In terms of processing, the N-terminus is blocked. The N-terminal Gln is cyclized to a pyroglutamic acid.

The protein localises to the secreted. The catalysed reaction is [6)-beta-D-fructofuranosyl-(2-&gt;](n) alpha-D-glucopyranoside + sucrose = [6)-beta-D-fructofuranosyl-(2-&gt;](n+1) alpha-D-glucopyranoside + D-glucose. With respect to regulation, strongly inhibited by Hg(2+) and slightly activated by Co(2+). Not inhibited by the metal ion chelator EDTA, suggesting that this enzyme does not need a metal cofactor. Functionally, catalyzes the synthesis of levan, a fructose polymer, by transferring the fructosyl moiety from sucrose to a growing acceptor molecule. Also displays sucrose hydrolase activity. In vitro, catalyzes transfructosylation from sucrose to a variety of acceptors including water (sucrose hydrolysis), glucose (exchange reaction), fructan (polymerase reaction) and sucrose (oligofructoside synthesis). Levansucrase of G.diazotrophicus SRT4, unlike the enzyme of B.subtilis, causes accumulation of large quantities of tri- and tetrasaccharides but small quantities of high-molecular-mass levan. It may act more as a sucrose hydrolase than as a fructan polymerase, and may be the key enzyme in the sucrose metabolism of G.diazotrophicus SRT4. The protein is Levansucrase of Gluconacetobacter diazotrophicus (Acetobacter diazotrophicus).